A 906-amino-acid polypeptide reads, in one-letter code: Glutamate receptor 1 (906 aa).

Residues Met1–Gly18 form the signal peptide. The Extracellular segment spans residues Ala19–Ala536. N-linked (GlcNAc...) asparagine glycosylation is found at Asn63, Asn249, Asn257, Asn363, Asn401, and Asn406. A disulfide bond links Cys75 and Cys323. Positions 492, 494, and 499 each coordinate L-glutamate. A helical membrane pass occupies residues Tyr537–Val557. At Ser558 to Glu584 the chain is on the cytoplasmic side. Positions Phe585–Gln600 form an intramembrane region, helical; Pore-forming. Residues Gln601–Cys603 lie within the membrane without spanning it. Cys603 is lipidated: S-palmitoyl cysteine. Over Asp604–Ser609 the chain is Cytoplasmic. Residues Leu610 to Tyr630 form a helical membrane-spanning segment. The Extracellular segment spans residues Thr631 to Asn805. Ser645 is subject to Phosphoserine. The L-glutamate site is built by Ser668 and Thr669. Phosphoserine is present on Ser710. An L-glutamate-binding site is contributed by Glu719. A disulfide bridge connects residues Cys732 and Cys787. Residues Val806–Ile826 form a helical membrane-spanning segment. Over Glu827 to Leu906 the chain is Cytoplasmic. Residue Cys829 is the site of S-palmitoyl cysteine attachment. Phosphoserine is present on residues Ser849 and Ser863. The interval Arg861–Ser880 is disordered. The span at Ser863–Ser872 shows a compositional bias: low complexity. The PDZ-binding motif lies at Ala903 to Leu906.

This sequence belongs to the glutamate-gated ion channel (TC 1.A.10.1) family. GRIA1 subfamily. As to quaternary structure, homotetramer or heterotetramer of pore-forming glutamate receptor subunits; heteromeric assembly can be the result of both receptor subtype and flip-flop forms and according the composition, one partner can be dominant with respect to the fast desensitizing current component, whereas the other can determine the steady-state component. Tetramers may be formed by the dimerization of dimers. Found in a complex with GRIA2, GRIA3, GRIA4, CNIH2, CNIH3, CACNG2, CACNG3, CACNG4, CACNG5, CACNG7 and CACNG8. Interacts with HIP1 and RASGRF2. Interacts with SYNDIG1 and GRIA2. Interacts with DLG1 (via C-terminus). Interacts with LRFN1. Interacts with PRKG2. Interacts with CNIH2 and CACNG2. Interacts with CACNG5; this interaction modulates the gating. Interacts (via C-terminus) with PDLIM4 (via LIM domain); this interaction as well as the interaction of PDLIM4 with alpha-actinin is required for their colocalization in early endosomes. Interacts with SNX27 (via PDZ domain); the interaction is required for recycling to the plasma membrane when endocytosed and prevent degradation in lysosomes. Interacts (via PDZ-binding motif) with SHANK3 (via PDZ domain). Interacts with CACNG3; associates GRIA1 with the adapter protein complex 4 (AP-4) to target GRIA1 to the somatodendritic compartment of neurons. Interacts with CACNG2; this interaction mediates traffick to the plasma membrane and modulation of desensitization. Interaction with CNIH2 and CNIH3; this interaction promotes expression at the plasma membrane and extensively modulates their gating properties by slowing deactivation and desensitization kinetics. Found in a complex with GRIA2, GRIA3, GRIA4, DLG4, CACNG8 and CNIH2. Post-translationally, phosphorylated at Ser-645. Phosphorylated at Ser-710 by PKC. Phosphorylated at Ser-849 by PKC, PKA and CAMK2. Phosphorylated at Ser-863 by PKC, PKA and PRKG2. Phosphorylation of Ser-863 is reduced by induction of long-term depression and increased by induction of long-term potentiation. Palmitoylated. Depalmitoylated by CPT1C and upon L-glutamate stimulation. ZDHHC3/GODZ specifically palmitoylates Cys-603, which leads to Golgi retention and decreased cell surface expression. In contrast, Cys-829 palmitoylation does not affect cell surface expression but regulates stimulation-dependent endocytosis.

It is found in the cell membrane. Its subcellular location is the endoplasmic reticulum membrane. It localises to the postsynaptic cell membrane. The protein resides in the postsynaptic density membrane. The protein localises to the cell projection. It is found in the dendrite. Its subcellular location is the dendritic spine. It localises to the early endosome membrane. The protein resides in the recycling endosome membrane. The protein localises to the presynapse. It is found in the synapse. The enzyme catalyses Ca(2+)(in) = Ca(2+)(out). It catalyses the reaction Na(+)(in) = Na(+)(out). It carries out the reaction Mg(2+)(in) = Mg(2+)(out). The catalysed reaction is Li(+)(in) = Li(+)(out). The enzyme catalyses K(+)(in) = K(+)(out). It catalyses the reaction Sr(2+)(in) = Sr(2+)(out). Functionally, ionotropic glutamate receptor that functions as a ligand-gated cation channel, gated by L-glutamate and glutamatergic agonists such as alpha-amino-3-hydroxy-5-methyl-4-isoxazolepropionic acid (AMPA), quisqualic acid, and kainic acid. L-glutamate acts as an excitatory neurotransmitter at many synapses in the central nervous system. Binding of the excitatory neurotransmitter L-glutamate induces a conformation change, leading to the opening of the cation channel, and thereby converts the chemical signal to an electrical impulse upon entry of monovalent and divalent cations such as sodium and calcium. The receptor then desensitizes rapidly and enters in a transient inactive state, characterized by the presence of bound agonist. In the presence of CACNG2 or CACNG4 or CACNG7 or CACNG8, shows resensitization which is characterized by a delayed accumulation of current flux upon continued application of L-glutamate. Calcium (Ca(2+)) permeability depends on subunits composition and, heteromeric channels containing edited GRIA2 subunit are calcium-impermeable. Also permeable to other divalents cations such as strontium(2+) and magnesium(2+) and monovalent cations such as potassium(1+) and lithium(1+). The protein is Glutamate receptor 1 of Macaca fascicularis (Crab-eating macaque).